A 74-amino-acid polypeptide reads, in one-letter code: MSAEEGTGDSTTAEVIEVVGKTGMHGEAMQVKCRIQEGSNQGRIITRNVLGPVRMGDVLQLRETQRDADSIGGR.

Belongs to the eukaryotic ribosomal protein eS28 family.

The sequence is that of Small ribosomal subunit protein eS28 from Halorubrum lacusprofundi (strain ATCC 49239 / DSM 5036 / JCM 8891 / ACAM 34).